Reading from the N-terminus, the 1068-residue chain is Ubiquitin-protein ligase E3B (1068 aa).

At Met1 the chain carries N-acetylmethionine. The 30-residue stretch at Arg29–Asp58 folds into the IQ domain. Phosphoserine is present on Ser419. Residues Ser702–Ser1068 enclose the HECT domain. Cys1036 (glycyl thioester intermediate) is an active-site residue.

In terms of tissue distribution, widely expressed.

Its subcellular location is the postsynaptic density. The enzyme catalyses S-ubiquitinyl-[E2 ubiquitin-conjugating enzyme]-L-cysteine + [acceptor protein]-L-lysine = [E2 ubiquitin-conjugating enzyme]-L-cysteine + N(6)-ubiquitinyl-[acceptor protein]-L-lysine.. It participates in protein modification; protein ubiquitination. In terms of biological role, E3 ubiquitin-protein ligase which accepts ubiquitin from an E2 ubiquitin-conjugating enzyme in the form of a thioester and then directly transfers the ubiquitin to targeted substrates. Ubiquitinates BCKDK and targets it for degradation, thereby regulating various metabolic processes. Involved in the positive regulation of neurite branching in hippocampal neurons and the control of neuronal spine number and morphology, through the ubiquitination of PPP3CC. This chain is Ubiquitin-protein ligase E3B (UBE3B), found in Homo sapiens (Human).